The following is a 274-amino-acid chain: 2,3,4,5-tetrahydropyridine-2,6-dicarboxylate N-succinyltransferase (274 aa).

Residues R104 and D141 each coordinate substrate.

It belongs to the transferase hexapeptide repeat family. In terms of assembly, homotrimer.

It localises to the cytoplasm. It carries out the reaction (S)-2,3,4,5-tetrahydrodipicolinate + succinyl-CoA + H2O = (S)-2-succinylamino-6-oxoheptanedioate + CoA. It participates in amino-acid biosynthesis; L-lysine biosynthesis via DAP pathway; LL-2,6-diaminopimelate from (S)-tetrahydrodipicolinate (succinylase route): step 1/3. In Shewanella denitrificans (strain OS217 / ATCC BAA-1090 / DSM 15013), this protein is 2,3,4,5-tetrahydropyridine-2,6-dicarboxylate N-succinyltransferase.